Consider the following 466-residue polypeptide: MSSPLGHFQILVFLHALLIFSAESRKTQLLNDNDVESSDKSAKGTRWAVLVAGSNEYYNYRHQADICHAYQILRKGGLKDENIIVFMYDDIAFSSENPRPGVIINKPDGEDVYKGVPKDYTKEAVNVQNFYNVLLGNESGVTGGNGKVVKSGPNDNIFIYYADHGAPGLIAMPTGDEVMAKDFNEVLEKMHKRKKYNKMVIYVEACESGSMFEGILKKNLNIYAVTAANSKESSWGVYCPESYPPPPSEIGTCLGDTFSISWLEDSDLHDMSKETLEQQYHVVKRRVGSDVPETSHVCRFGTEKMLKDYLSSYIGRNPENDNFTFTESFSSPISNSGLVNPRDIPLLYLQRKIQKAPMGSLESKEAQKKLLDEKNHRKQIDQSITDILRLSVKQTNVLNLLTSTRTTGQPLVDDWDCFKTLVNSFKNHCGATVHYGLKYTGALANICNMGVDVKQTVSAIEQACSM.

A signal peptide spans 1 to 24 (MSSPLGHFQILVFLHALLIFSAES). Asparagine 137 carries an N-linked (GlcNAc...) asparagine glycan. Residue histidine 164 is part of the active site. Cysteine 206 acts as the Nucleophile in catalysis. An intrachain disulfide couples cysteine 239 to cysteine 253. A glycan (N-linked (GlcNAc...) asparagine) is linked at asparagine 322. Intrachain disulfides connect cysteine 417/cysteine 447 and cysteine 429/cysteine 464.

It belongs to the peptidase C13 family. Auto-catalytic activation. Seed specific. Restricted to developing seeds at 7 days after anthesis, and, at lower levels, detected in flowers. Detected in siliques, specifically in seed coats (at protein level).

Its subcellular location is the secreted. The protein resides in the extracellular space. It localises to the cell wall. The protein localises to the vacuole. The enzyme catalyses Hydrolysis of proteins and small molecule substrates at -Asn-|-Xaa- bonds.. With respect to regulation, strongly inhibited by biotin-YVAD-fmk (a caspase-1 inhibitor) and by Ac-DEVD-fmk. Its function is as follows. Asparagine-specific endopeptidase that may be involved in processing of proteins targeted to vacuoles. Probably involved in post-translational proteolysis of seed storage proteins in the protein storage vacuole of developing seeds. Exhibits a caspase-1-like activity in extracellular granules. At the early stage of seed development, required for the formation of the seed coat, by regulating cell death of specific cell layers in inner integument. This is Vacuolar-processing enzyme delta-isozyme from Arabidopsis thaliana (Mouse-ear cress).